Here is a 491-residue protein sequence, read N- to C-terminus: Diacylglycerol O-acyltransferase 1 (491 aa).

A disordered region spans residues 1 to 60 (MGDRGGAGGTRRRRTGSRPSSHGGGGPAAAEEEVRDAAAGPDMGAAGDAPAPAPSKDADD). Over 1–86 (MGDRGGAGGT…SLFSSDSGFN (86 aa)) the chain is Cytoplasmic. An involved in homomerization region spans residues 1–94 (MGDRGGAGGT…FNNYRGILNW (94 aa)). 2 positions are modified to phosphoserine: serine 20 and serine 21. A compositionally biased stretch (low complexity) spans 37–50 (AAAGPDMGAAGDAP). Residues 87–121 (NYRGILNWCVVMLILSNARLFLENLIKYGILVDPI) traverse the membrane as a helical segment. The Lumenal segment spans residues 122-133 (QVVSLFLKDPYS). An extracellular loop 1 (EL1) region spans residues 122–133 (QVVSLFLKDPYS). A helical membrane pass occupies residues 134-159 (WPAPCLVIAANVFAVAAFQVEKRLAV). Positions 134-491 (WPAPCLVIAA…LNYEAPVAGA (358 aa)) are MBOAT fold. At 160-164 (GALTE) the chain is on the cytoplasmic side. Residues 165-187 (QAGLLLHVANLATILCFPAAVVL) traverse the membrane as a helical segment. Residues 188 to 194 (LVESITP) are Lumenal-facing. The helical transmembrane segment at 195–226 (VGSLLALMVHTILFLKLFSYRDVNLWCRRARA) threads the bilayer. Over 227–276 (KAASAGKRASSAAAPHTVSYPDNLTYRDLYYFLFAPTLCYELNFPRSPRI) the chain is Cytoplasmic. The intracellular loop 1 (IL1) stretch occupies residues 227 to 279 (KAASAGKRASSAAAPHTVSYPDNLTYRDLYYFLFAPTLCYELNFPRSPRIRKR). The chain crosses the membrane as a helical span at residues 277 to 311 (RKRFLLRRILEMLFFTQLQVGLIQQWMVPTIQNSM). Residues 312–318 (KPFKDMD) are Lumenal-facing. A helical transmembrane segment spans residues 319–356 (YSRIIERLLKLAVPNHLIWLIFFYWLFHSCLNAVAELM). Over 357 to 402 (QFGDREFYRDWWNSESVTYFWQNWNIPVHKWCIRHFYKPMLRRGSS) the chain is Cytoplasmic. An intracellular loop 2 (IL2) region spans residues 357–402 (QFGDREFYRDWWNSESVTYFWQNWNIPVHKWCIRHFYKPMLRRGSS). Residues 363–369 (FYRDWWN) carry the FYXDWWN motif motif. Residues 377 to 385 (WQNWNIPVH), tyrosine 393, and arginine 407 contribute to the an acyl-CoA site. Residues 383-397 (PVHKWCIRHFYKPML) are amphipathic helix (AH). Residues 403–423 (RWMARIGVFLASAFFHEYLVS) form a helical membrane-spanning segment. Residue histidine 418 is part of the active site. Residues 424 to 431 (VPLRMFRL) lie on the Lumenal side of the membrane. A helical membrane pass occupies residues 432–450 (WAFTGMMAQIPLAWFVGRF). Residues 451–452 (FQ) lie on the Cytoplasmic side of the membrane. Residues 453-484 (GNYGNAAVWLTLIIGQPIAVLMYVHDYYVLNY) traverse the membrane as a helical segment. Tyrosine 480 is a binding site for an acyl-CoA. Residues 485 to 491 (EAPVAGA) are Lumenal-facing.

The protein belongs to the membrane-bound acyltransferase family. Sterol o-acyltransferase subfamily. As to quaternary structure, homodimer or homotetramer; both forms have similar enzymatic activities.

Its subcellular location is the endoplasmic reticulum membrane. The catalysed reaction is an acyl-CoA + a 1,2-diacyl-sn-glycerol = a triacyl-sn-glycerol + CoA. It carries out the reaction all-trans-retinol + an acyl-CoA = an all-trans-retinyl ester + CoA. The enzyme catalyses 2-(9Z-octadecenoyl)-glycerol + (9Z)-octadecenoyl-CoA = 1,2-di-(9Z-octadecenoyl)-sn-glycerol + CoA. It catalyses the reaction 1,2-di-(9Z-octadecenoyl)-sn-glycerol + (9Z)-octadecenoyl-CoA = 1,2,3-tri-(9Z-octadecenoyl)-glycerol + CoA. The catalysed reaction is all-trans-retinol + hexadecanoyl-CoA = all-trans-retinyl hexadecanoate + CoA. It carries out the reaction 1-O-(9Z-octadecenyl)-glycerol + (9Z)-octadecenoyl-CoA = 1-O-(9Z-octadecyl)-3-(9Z-octadecenoyl)-glycerol + CoA. The enzyme catalyses 1-O-(9Z-octadecyl)-3-(9Z-octadecenoyl)-glycerol + (9Z)-octadecenoyl-CoA = 1-O-(9Z-octadecenyl)-2,3-di-(9Z-octadecenoyl)glycerol + CoA. It catalyses the reaction 1-(9Z-octadecenoyl)-glycerol + (9Z)-octadecenoyl-CoA = 1,2-di-(9Z-octadecenoyl)-glycerol + CoA. The catalysed reaction is 1,2-di-(9Z-octadecenoyl)-glycerol + (9Z)-octadecenoate + H(+) = 1,2,3-tri-(9Z-octadecenoyl)-glycerol + H2O. It carries out the reaction 1-octadecanoyl-2-(5Z,8Z,11Z,14Z-eicosatetraenoyl)-sn-glycerol + (9Z)-octadecenoyl-CoA = 1-octadecanoyl-2-(5Z,8Z,11Z,14Z)-eicosatetraenoyl-3-(9Z)-octadecenoyl-sn-glycerol + CoA. The enzyme catalyses hexadecane-1,2-diol + 2 hexadecanoyl-CoA = 1,2-O,O-dihexadecanoyl-1,2-hexadecanediol + 2 CoA. It catalyses the reaction hexadecane-1,2-diol + hexadecanoyl-CoA = 2-hydroxyhexadecyl hexadecanoate + CoA. The catalysed reaction is 2-(9Z-octadecenoyl)-glycerol + hexadecanoyl-CoA = 1-hexadecanoyl-2-(9Z-octadecenoyl)-sn-glycerol + CoA. It carries out the reaction 1,2-di-(9Z-octadecenoyl)-sn-glycerol + hexadecanoyl-CoA = 1,2-di-(9Z)-octadecenoyl-3-hexadecanoyl-sn-glycerol + CoA. The enzyme catalyses hexadecan-1-ol + hexadecanoyl-CoA = hexadecanyl hexadecanoate + CoA. It catalyses the reaction 13-cis-retinol + hexadecanoyl-CoA = 13-cis-retinyl hexadecanoate + CoA. The catalysed reaction is 1,3-di-(9Z-octadecenoyl)-glycerol + (9Z)-octadecenoyl-CoA = 1,2,3-tri-(9Z-octadecenoyl)-glycerol + CoA. It carries out the reaction 2,3-di-(9Z)-octadecenoyl-sn-glycerol + (9Z)-octadecenoyl-CoA = 1,2,3-tri-(9Z-octadecenoyl)-glycerol + CoA. The protein operates within lipid metabolism; glycerolipid metabolism. Its function is as follows. Catalyzes the terminal and only committed step in triacylglycerol synthesis by using diacylglycerol and fatty acyl CoA as substrates. Highly expressed in epithelial cells of the small intestine and its activity is essential for the absorption of dietary fats. In liver, plays a role in esterifying exogenous fatty acids to glycerol, and is required to synthesize fat for storage. Also present in female mammary glands, where it produces fat in the milk. May be involved in VLDL (very low density lipoprotein) assembly. In contrast to DGAT2 it is not essential for survival. Functions as the major acyl-CoA retinol acyltransferase (ARAT) in the skin, where it acts to maintain retinoid homeostasis and prevent retinoid toxicity leading to skin and hair disorders. Exhibits additional acyltransferase activities, includin acyl CoA:monoacylglycerol acyltransferase (MGAT), wax monoester and wax diester synthases. Also able to use 1-monoalkylglycerol (1-MAkG) as an acyl acceptor for the synthesis of monoalkyl-monoacylglycerol (MAMAG). The chain is Diacylglycerol O-acyltransferase 1 (DGAT1) from Chlorocebus aethiops (Green monkey).